The chain runs to 132 residues: Small ribosomal subunit protein uS8c (132 aa).

This sequence belongs to the universal ribosomal protein uS8 family. Part of the 30S ribosomal subunit.

Its subcellular location is the plastid. The protein resides in the cyanelle. Functionally, one of the primary rRNA binding proteins, it binds directly to 16S rRNA central domain where it helps coordinate assembly of the platform of the 30S subunit. This Cyanophora paradoxa protein is Small ribosomal subunit protein uS8c (rps8).